The chain runs to 340 residues: Alpha-1,3-galactosyltransferase 2 (340 aa).

The Cytoplasmic segment spans residues 1 to 12 (MALKEGLRAWKR). A helical; Signal-anchor for type II membrane protein membrane pass occupies residues 13 to 32 (IFWRQILLTLGLLGLFLYGL). Residues 33 to 340 (PKFRHLEALI…APKGYRLLRN (308 aa)) are Lumenal-facing. Asn58 and Asn100 each carry an N-linked (GlcNAc...) asparagine glycan. Mn(2+) is bound by residues Asp199 and Asp201.

It belongs to the glycosyltransferase 6 family. It depends on Mn(2+) as a cofactor. In terms of tissue distribution, expressed in thymus and monocyte derived dendritic cells.

It is found in the golgi apparatus. The protein localises to the golgi stack membrane. It catalyses the reaction a beta-D-galactosyl-(1-&gt;4)-N-acetyl-beta-D-glucosaminyl derivative + UDP-alpha-D-galactose = an alpha-D-galactosyl-(1-&gt;3)-beta-D-galactosyl-(1-&gt;4)-N-acetyl-beta-D-glucosaminyl derivative + UDP + H(+). The enzyme catalyses a beta-D-Gal-(1-&gt;4)-beta-D-Glc-(1&lt;-&gt;1)-Cer(d18:1(4E)) + UDP-alpha-D-galactose = an isogloboside iGb3Cer (d18:1(4E)) + UDP + H(+). The catalysed reaction is a globoside Gb3Cer + UDP-alpha-D-galactose = a globoside GalGb3Cer + UDP + H(+). In terms of biological role, synthesizes the galactose-alpha(1,3)-galactose group on the glycosphingolipid isoglobotrihexosylceramide or isogloboside 3 (iGb3) by catalyzing the transfer of galactose from UDP-Galactose to its acceptor molecule Gal-beta-1,4-Glc-ceramide. Can also catalyze the addition of galactose to iGb3 itself to form polygalactose structures. The sequence is that of Alpha-1,3-galactosyltransferase 2 from Homo sapiens (Human).